The primary structure comprises 662 residues: UvrABC system protein B (662 aa).

The region spanning 31 to 188 (DNIEGGEKAQ…NDLVDIQFER (158 aa)) is the Helicase ATP-binding domain. 44–51 (GATGTGKT) lines the ATP pocket. The Beta-hairpin signature appears at 97 to 120 (YYDYYQPEAYVPSSDTYIEKDSSV). The Helicase C-terminal domain maps to 435 to 601 (QIDDLLGEIN…TIKKEIRDLI (167 aa)). A UVR domain is found at 626 to 661 (KDMIKKLEGQMQEAAGLLDFELAAQIRDMILEIKAM).

Belongs to the UvrB family. As to quaternary structure, forms a heterotetramer with UvrA during the search for lesions. Interacts with UvrC in an incision complex.

It localises to the cytoplasm. In terms of biological role, the UvrABC repair system catalyzes the recognition and processing of DNA lesions. A damage recognition complex composed of 2 UvrA and 2 UvrB subunits scans DNA for abnormalities. Upon binding of the UvrA(2)B(2) complex to a putative damaged site, the DNA wraps around one UvrB monomer. DNA wrap is dependent on ATP binding by UvrB and probably causes local melting of the DNA helix, facilitating insertion of UvrB beta-hairpin between the DNA strands. Then UvrB probes one DNA strand for the presence of a lesion. If a lesion is found the UvrA subunits dissociate and the UvrB-DNA preincision complex is formed. This complex is subsequently bound by UvrC and the second UvrB is released. If no lesion is found, the DNA wraps around the other UvrB subunit that will check the other stand for damage. The sequence is that of UvrABC system protein B from Streptococcus gordonii (strain Challis / ATCC 35105 / BCRC 15272 / CH1 / DL1 / V288).